Reading from the N-terminus, the 333-residue chain is Holliday junction branch migration complex subunit RuvB (333 aa).

The tract at residues 1 to 182 is large ATPase domain (RuvB-L); that stretch reads MDERLLSGES…FGVLSRLEYY (182 aa). ATP-binding positions include Leu21, Arg22, Gly63, Lys66, Thr67, Thr68, 129-131, Arg172, Tyr182, and Arg219; that span reads EDF. Thr67 is a binding site for Mg(2+). The interval 183-253 is small ATPAse domain (RuvB-S); sequence TVDQLSEIVE…ITQMALELLQ (71 aa). The interval 256-333 is head domain (RuvB-H); the sequence is KLGLDHIDHK…EHFGMEMPKV (78 aa). DNA is bound by residues Arg311 and Arg316.

This sequence belongs to the RuvB family. Homohexamer. Forms an RuvA(8)-RuvB(12)-Holliday junction (HJ) complex. HJ DNA is sandwiched between 2 RuvA tetramers; dsDNA enters through RuvA and exits via RuvB. An RuvB hexamer assembles on each DNA strand where it exits the tetramer. Each RuvB hexamer is contacted by two RuvA subunits (via domain III) on 2 adjacent RuvB subunits; this complex drives branch migration. In the full resolvosome a probable DNA-RuvA(4)-RuvB(12)-RuvC(2) complex forms which resolves the HJ.

The protein localises to the cytoplasm. The catalysed reaction is ATP + H2O = ADP + phosphate + H(+). The RuvA-RuvB-RuvC complex processes Holliday junction (HJ) DNA during genetic recombination and DNA repair, while the RuvA-RuvB complex plays an important role in the rescue of blocked DNA replication forks via replication fork reversal (RFR). RuvA specifically binds to HJ cruciform DNA, conferring on it an open structure. The RuvB hexamer acts as an ATP-dependent pump, pulling dsDNA into and through the RuvAB complex. RuvB forms 2 homohexamers on either side of HJ DNA bound by 1 or 2 RuvA tetramers; 4 subunits per hexamer contact DNA at a time. Coordinated motions by a converter formed by DNA-disengaged RuvB subunits stimulates ATP hydrolysis and nucleotide exchange. Immobilization of the converter enables RuvB to convert the ATP-contained energy into a lever motion, pulling 2 nucleotides of DNA out of the RuvA tetramer per ATP hydrolyzed, thus driving DNA branch migration. The RuvB motors rotate together with the DNA substrate, which together with the progressing nucleotide cycle form the mechanistic basis for DNA recombination by continuous HJ branch migration. Branch migration allows RuvC to scan DNA until it finds its consensus sequence, where it cleaves and resolves cruciform DNA. This is Holliday junction branch migration complex subunit RuvB from Bacillus cereus (strain ATCC 10987 / NRS 248).